A 250-amino-acid polypeptide reads, in one-letter code: Ribosomal RNA small subunit methyltransferase J (250 aa).

S-adenosyl-L-methionine is bound by residues 101 to 102 (RD), 117 to 118 (ER), 153 to 154 (SS), and Asp-171.

The protein belongs to the methyltransferase superfamily. RsmJ family.

The protein localises to the cytoplasm. It carries out the reaction guanosine(1516) in 16S rRNA + S-adenosyl-L-methionine = N(2)-methylguanosine(1516) in 16S rRNA + S-adenosyl-L-homocysteine + H(+). In terms of biological role, specifically methylates the guanosine in position 1516 of 16S rRNA. The sequence is that of Ribosomal RNA small subunit methyltransferase J from Escherichia coli (strain UTI89 / UPEC).